We begin with the raw amino-acid sequence, 688 residues long: Potassium-transporting ATPase ATP-binding subunit (688 aa).

Transmembrane regions (helical) follow at residues 37 to 57, 65 to 85, 219 to 239, and 262 to 282; these read FLVY…LVGI, ILGI…AEAI, IALQ…TVSL, and VALL…SIGI. The 4-aspartylphosphate intermediate role is filled by D313. ATP-binding positions include D350, E354, 383–390, and K401; that span reads FTAKTRMS. Positions 524 and 528 each coordinate Mg(2+). The next 3 helical transmembrane spans lie at 594–614, 622–642, and 668–688; these read FAII…LNIM, AIFS…PLAL, and IIVP…IGIV.

The protein belongs to the cation transport ATPase (P-type) (TC 3.A.3) family. Type IA subfamily. As to quaternary structure, the system is composed of three essential subunits: KdpA, KdpB and KdpC.

It localises to the cell membrane. The catalysed reaction is K(+)(out) + ATP + H2O = K(+)(in) + ADP + phosphate + H(+). Its function is as follows. Part of the high-affinity ATP-driven potassium transport (or Kdp) system, which catalyzes the hydrolysis of ATP coupled with the electrogenic transport of potassium into the cytoplasm. This subunit is responsible for energy coupling to the transport system and for the release of the potassium ions to the cytoplasm. The polypeptide is Potassium-transporting ATPase ATP-binding subunit (Clostridium botulinum (strain Eklund 17B / Type B)).